Here is a 23-residue protein sequence, read N- to C-terminus: Chaperonin GroEL (23 aa).

This sequence belongs to the chaperonin (HSP60) family. As to quaternary structure, forms a cylinder of 14 subunits composed of two heptameric rings stacked back-to-back. Interacts with the co-chaperonin GroES. Post-translationally, phosphorylated on threonine.

It localises to the cytoplasm. The catalysed reaction is ATP + H2O + a folded polypeptide = ADP + phosphate + an unfolded polypeptide.. Functionally, together with its co-chaperonin GroES, plays an essential role in assisting protein folding. The GroEL-GroES system forms a nano-cage that allows encapsulation of the non-native substrate proteins and provides a physical environment optimized to promote and accelerate protein folding. The protein is Chaperonin GroEL of Acidithiobacillus ferrooxidans (Thiobacillus ferrooxidans).